The following is a 603-amino-acid chain: Proline--tRNA ligase (603 aa).

This sequence belongs to the class-II aminoacyl-tRNA synthetase family. ProS type 1 subfamily. As to quaternary structure, homodimer.

Its subcellular location is the cytoplasm. It carries out the reaction tRNA(Pro) + L-proline + ATP = L-prolyl-tRNA(Pro) + AMP + diphosphate. Functionally, catalyzes the attachment of proline to tRNA(Pro) in a two-step reaction: proline is first activated by ATP to form Pro-AMP and then transferred to the acceptor end of tRNA(Pro). As ProRS can inadvertently accommodate and process non-cognate amino acids such as alanine and cysteine, to avoid such errors it has two additional distinct editing activities against alanine. One activity is designated as 'pretransfer' editing and involves the tRNA(Pro)-independent hydrolysis of activated Ala-AMP. The other activity is designated 'posttransfer' editing and involves deacylation of mischarged Ala-tRNA(Pro). The misacylated Cys-tRNA(Pro) is not edited by ProRS. The chain is Proline--tRNA ligase from Prochlorococcus marinus (strain SARG / CCMP1375 / SS120).